Consider the following 483-residue polypeptide: Beta-glucosidase 4 (483 aa).

Residues Gln-29, His-131, 176–177 (NE), Tyr-310, and Glu-380 contribute to the a beta-D-glucoside site. Glu-177 acts as the Proton donor in catalysis. The active-site Nucleophile is the Glu-380. The N-linked (GlcNAc...) asparagine glycan is linked to Asn-398. Residues Trp-429, 436–437 (EW), and Phe-445 each bind a beta-D-glucoside.

It belongs to the glycosyl hydrolase 1 family.

It carries out the reaction Hydrolysis of terminal, non-reducing beta-D-glucosyl residues with release of beta-D-glucose.. The chain is Beta-glucosidase 4 (BGLU4) from Oryza sativa subsp. japonica (Rice).